A 203-amino-acid polypeptide reads, in one-letter code: Small ribosomal subunit protein uS4 (203 aa).

Positions 93-156 (RRLDNVVYRL…AKVPAILEAV (64 aa)) constitute an S4 RNA-binding domain.

The protein belongs to the universal ribosomal protein uS4 family. In terms of assembly, part of the 30S ribosomal subunit. Contacts protein S5. The interaction surface between S4 and S5 is involved in control of translational fidelity.

Functionally, one of the primary rRNA binding proteins, it binds directly to 16S rRNA where it nucleates assembly of the body of the 30S subunit. Its function is as follows. With S5 and S12 plays an important role in translational accuracy. The sequence is that of Small ribosomal subunit protein uS4 from Streptococcus mutans serotype c (strain ATCC 700610 / UA159).